We begin with the raw amino-acid sequence, 375 residues long: Aminomethyltransferase (375 aa).

It belongs to the GcvT family. In terms of assembly, the glycine cleavage system is composed of four proteins: P, T, L and H.

It catalyses the reaction N(6)-[(R)-S(8)-aminomethyldihydrolipoyl]-L-lysyl-[protein] + (6S)-5,6,7,8-tetrahydrofolate = N(6)-[(R)-dihydrolipoyl]-L-lysyl-[protein] + (6R)-5,10-methylene-5,6,7,8-tetrahydrofolate + NH4(+). In terms of biological role, the glycine cleavage system catalyzes the degradation of glycine. The polypeptide is Aminomethyltransferase (Cupriavidus taiwanensis (strain DSM 17343 / BCRC 17206 / CCUG 44338 / CIP 107171 / LMG 19424 / R1) (Ralstonia taiwanensis (strain LMG 19424))).